We begin with the raw amino-acid sequence, 222 residues long: MAAPVRQTRSLLGWVTTLGPGSRGYRAPPPPRRSREPWWPDPDDPLTPRWQLGPRYAAKQFARHGAASGVDPGSLWPSREQLLELEAEEREWYPSLAVMQESLRVQQLAEEQKRQAREQLIEECMAKMPQMIENWRRQQQARREKAQADKERRARLQAEAQERLGYHVDPRSARFQELLQDLEKQHRKRLKEEKQRKKKEARAAAMAAAAAQDPADSETPDS.

3 disordered regions span residues 1–51, 136–170, and 182–222; these read MAAP…PRWQ, RRQQ…HVDP, and LEKQ…TPDS. Basic and acidic residues predominate over residues 141–170; the sequence is ARREKAQADKERRARLQAEAQERLGYHVDP. Residues 144 to 213 adopt a coiled-coil conformation; it reads EKAQADKERR…AAMAAAAAQD (70 aa). Residues 184–200 carry the Nuclear localization signal motif; sequence KQHRKRLKEEKQRKKKE. Low complexity predominate over residues 203–212; the sequence is AAAMAAAAAQ.

It belongs to the mitochondrion-specific ribosomal protein mL64 family. As to quaternary structure, component of the mitochondrial ribosome large subunit (39S) which comprises a 16S rRNA and about 50 distinct proteins. Interacts with GADD45A, GADD45B and GADD45G. Interacts with NR4A1 via the NR4A1 AB domain. Interacts with ATAD3A and ATAD3B.

It is found in the mitochondrion. The protein resides in the nucleus. In terms of biological role, acts as a negative regulator of G1 to S cell cycle phase progression by inhibiting cyclin-dependent kinases. Inhibitory effects are additive with GADD45 proteins but also occur in the absence of GADD45 proteins. Acts as a repressor of the orphan nuclear receptor NR4A1 by inhibiting AB domain-mediated transcriptional activity. May be involved in the hormone-mediated regulation of NR4A1 transcriptional activity. May play a role in mitochondrial protein synthesis. The sequence is that of Large ribosomal subunit protein mL64 (GADD45GIP1) from Bos taurus (Bovine).